A 487-amino-acid chain; its full sequence is MHNENQTLIFEISKEGRVGYSLEALDVPEVDLADVLPANLVRSEAAELPEVSELDIMRHYTALSRRNHGVDSGFYPLGSCTMKYNPKINEAVARFSGFANVHPLQDESTAQGAMELLYDLQTSLVEITGMDEVTLQPAAGAHGEWTALMMIRAFHEANGEGHRNKVIVPDSAHGTNPASATVAGFETITVKSDDNGLVDIEDLRKVVGADTAALMLTNPNTLGLFEENIIEMAELIHSVGGKVYYDGANLNAVMSKARPGDMGFDCVHLNLHKTFTGPHGGGGPGSGPVGVKADLIPFLPKPVLVRTEEGAYHFDYNRPQSIGRVKPYYGNFGINVRAYTYIRTMGPDGLKAVTEYAVLNANYMMRRLEPFYDLPYNRHCKHEFVLSGHRQKKLGVRTLDIAKRLLDFGYHPPTTYFPLNVEEALMIEPTETESKETLDAFCDVMIQIAKEAEENPSIVQEAPHTTVVSRLDETRAARTPVLRYQKA.

Lys-273 carries the post-translational modification N6-(pyridoxal phosphate)lysine.

Belongs to the GcvP family. C-terminal subunit subfamily. In terms of assembly, the glycine cleavage system is composed of four proteins: P, T, L and H. In this organism, the P 'protein' is a heterodimer of two subunits. Requires pyridoxal 5'-phosphate as cofactor.

The enzyme catalyses N(6)-[(R)-lipoyl]-L-lysyl-[glycine-cleavage complex H protein] + glycine + H(+) = N(6)-[(R)-S(8)-aminomethyldihydrolipoyl]-L-lysyl-[glycine-cleavage complex H protein] + CO2. In terms of biological role, the glycine cleavage system catalyzes the degradation of glycine. The P protein binds the alpha-amino group of glycine through its pyridoxal phosphate cofactor; CO(2) is released and the remaining methylamine moiety is then transferred to the lipoamide cofactor of the H protein. This Lysinibacillus sphaericus (strain C3-41) protein is Probable glycine dehydrogenase (decarboxylating) subunit 2.